A 259-amino-acid polypeptide reads, in one-letter code: uncharacterized protein (259 aa).

The region spanning Gln110 to Thr259 is the N-acetyltransferase domain.

Its function is as follows. May be involved in maturation of the outermost layer of the spore. This is an uncharacterized protein from Bacillus subtilis (strain 168).